A 683-amino-acid chain; its full sequence is DNA ligase (683 aa).

Residues 35-39 (DTEYD), 84-85 (SL), and glutamate 116 contribute to the NAD(+) site. Residue lysine 118 is the N6-AMP-lysine intermediate of the active site. NAD(+) contacts are provided by arginine 139, glutamate 176, lysine 293, and lysine 317. Zn(2+) is bound by residues cysteine 419, cysteine 422, cysteine 437, and cysteine 443. The BRCT domain maps to 602–683 (AGPQLLAGKT…LMKLLAKGVE (82 aa)).

This sequence belongs to the NAD-dependent DNA ligase family. LigA subfamily. Requires Mg(2+) as cofactor. It depends on Mn(2+) as a cofactor.

The catalysed reaction is NAD(+) + (deoxyribonucleotide)n-3'-hydroxyl + 5'-phospho-(deoxyribonucleotide)m = (deoxyribonucleotide)n+m + AMP + beta-nicotinamide D-nucleotide.. Its function is as follows. DNA ligase that catalyzes the formation of phosphodiester linkages between 5'-phosphoryl and 3'-hydroxyl groups in double-stranded DNA using NAD as a coenzyme and as the energy source for the reaction. It is essential for DNA replication and repair of damaged DNA. The protein is DNA ligase of Dechloromonas aromatica (strain RCB).